We begin with the raw amino-acid sequence, 513 residues long: ATP synthase subunit alpha (513 aa).

169-176 (GDRQCGKT) is a binding site for ATP.

This sequence belongs to the ATPase alpha/beta chains family. As to quaternary structure, F-type ATPases have 2 components, CF(1) - the catalytic core - and CF(0) - the membrane proton channel. CF(1) has five subunits: alpha(3), beta(3), gamma(1), delta(1), epsilon(1). CF(0) has three main subunits: a(1), b(2) and c(9-12). The alpha and beta chains form an alternating ring which encloses part of the gamma chain. CF(1) is attached to CF(0) by a central stalk formed by the gamma and epsilon chains, while a peripheral stalk is formed by the delta and b chains.

It is found in the cell inner membrane. The catalysed reaction is ATP + H2O + 4 H(+)(in) = ADP + phosphate + 5 H(+)(out). Functionally, produces ATP from ADP in the presence of a proton gradient across the membrane. The alpha chain is a regulatory subunit. In Alteromonas mediterranea (strain DSM 17117 / CIP 110805 / LMG 28347 / Deep ecotype), this protein is ATP synthase subunit alpha.